The chain runs to 78 residues: Large ribosomal subunit protein bL28 (78 aa).

Belongs to the bacterial ribosomal protein bL28 family.

This is Large ribosomal subunit protein bL28 from Histophilus somni (strain 129Pt) (Haemophilus somnus).